Reading from the N-terminus, the 860-residue chain is Alanine--tRNA ligase (860 aa).

4 residues coordinate Zn(2+): His-563, His-567, Cys-665, and His-669.

Belongs to the class-II aminoacyl-tRNA synthetase family. Zn(2+) is required as a cofactor.

It is found in the cytoplasm. The enzyme catalyses tRNA(Ala) + L-alanine + ATP = L-alanyl-tRNA(Ala) + AMP + diphosphate. Functionally, catalyzes the attachment of alanine to tRNA(Ala) in a two-step reaction: alanine is first activated by ATP to form Ala-AMP and then transferred to the acceptor end of tRNA(Ala). Also edits incorrectly charged Ser-tRNA(Ala) and Gly-tRNA(Ala) via its editing domain. The polypeptide is Alanine--tRNA ligase (Vibrio cholerae serotype O1 (strain ATCC 39541 / Classical Ogawa 395 / O395)).